Reading from the N-terminus, the 243-residue chain is Ice-binding protein K1-A (243 aa).

The N-terminal stretch at 1 to 20 (MFSSTYLLAIIALAVSSVFA) is a signal peptide.

This sequence belongs to the ice-binding protein family.

Its subcellular location is the secreted. In terms of biological role, binds to the surface of ice crystals. Inhibits growth of the ice crystals. Has antifreeze activity for survival under snow cover. Has high thermal hysteresis (TH) activity, which is the ability to lower the freezing point of an aqueous solution below its melting point, and thus the freezing of the cell fluid can be prevented protecting the organism from ice damage. The TH activity of this protein is 2.0 degrees Celsius at 0.11 mM. This is Ice-binding protein K1-A from Typhula ishikariensis (Gray snow mold fungus).